A 163-amino-acid chain; its full sequence is Urease accessory protein UreE (163 aa).

The disordered stretch occupies residues 144-163; that stretch reads QPEPGAYGGSSAGSHDGHHH.

Belongs to the UreE family.

It is found in the cytoplasm. Involved in urease metallocenter assembly. Binds nickel. Probably functions as a nickel donor during metallocenter assembly. This Aliivibrio fischeri (strain ATCC 700601 / ES114) (Vibrio fischeri) protein is Urease accessory protein UreE.